We begin with the raw amino-acid sequence, 604 residues long: Elongation factor 4 (604 aa).

The 183-residue stretch at 7–189 folds into the tr-type G domain; that stretch reads SRLRNFCIIA…AVVDRIPPPA (183 aa). GTP contacts are provided by residues 19–24 and 136–139; these read DHGKST and NKID.

The protein belongs to the TRAFAC class translation factor GTPase superfamily. Classic translation factor GTPase family. LepA subfamily.

It localises to the cell inner membrane. It catalyses the reaction GTP + H2O = GDP + phosphate + H(+). Its function is as follows. Required for accurate and efficient protein synthesis under certain stress conditions. May act as a fidelity factor of the translation reaction, by catalyzing a one-codon backward translocation of tRNAs on improperly translocated ribosomes. Back-translocation proceeds from a post-translocation (POST) complex to a pre-translocation (PRE) complex, thus giving elongation factor G a second chance to translocate the tRNAs correctly. Binds to ribosomes in a GTP-dependent manner. In Prochlorococcus marinus (strain MIT 9303), this protein is Elongation factor 4.